The primary structure comprises 261 residues: Cytochrome c oxidase subunit 3 (261 aa).

The Mitochondrial matrix segment spans residues 1 to 15 (MAHQAHSYHMVDPSP). Residues 16–34 (WPIFGAITALLTTSGLIMW) form a helical membrane-spanning segment. The Mitochondrial intermembrane portion of the chain corresponds to 35–40 (FHYNSI). Residues 41-66 (ALLTAGLLSMLLVMIQWWRDVVREST) traverse the membrane as a helical segment. The Mitochondrial matrix segment spans residues 67 to 72 (FQGHHT). The chain crosses the membrane as a helical span at residues 73–105 (PTVQKGLRYGMILFITSEAFFFLGFFWAFFHSS). Topologically, residues 106 to 128 (LAPTPELGGQWPPTGIKPLNPLE) are mitochondrial intermembrane. The chain crosses the membrane as a helical span at residues 129-152 (VPLLNTAILLASGVTVTWAHHSIT). At 153 to 155 (EGN) the chain is on the mitochondrial matrix side. Residues 156 to 183 (RKQAIHALTLTILLGFYFTALQAMEYHE) traverse the membrane as a helical segment. The Mitochondrial intermembrane portion of the chain corresponds to 184 to 190 (ASFSIAD). Residues 191-223 (SVYGSTFFVATGFHGLHVIIGSSFLTICLLRLI) traverse the membrane as a helical segment. The Mitochondrial matrix segment spans residues 224–232 (KFHFTSNHH). The chain crosses the membrane as a helical span at residues 233–256 (FGFEAAAWYWHFVDIIWLFLYMSM). At 257–261 (YWWGS) the chain is on the mitochondrial intermembrane side.

It belongs to the cytochrome c oxidase subunit 3 family. In terms of assembly, component of the cytochrome c oxidase (complex IV, CIV), a multisubunit enzyme composed of 14 subunits. The complex is composed of a catalytic core of 3 subunits MT-CO1, MT-CO2 and MT-CO3, encoded in the mitochondrial DNA, and 11 supernumerary subunits COX4I, COX5A, COX5B, COX6A, COX6B, COX6C, COX7A, COX7B, COX7C, COX8 and NDUFA4, which are encoded in the nuclear genome. The complex exists as a monomer or a dimer and forms supercomplexes (SCs) in the inner mitochondrial membrane with NADH-ubiquinone oxidoreductase (complex I, CI) and ubiquinol-cytochrome c oxidoreductase (cytochrome b-c1 complex, complex III, CIII), resulting in different assemblies (supercomplex SCI(1)III(2)IV(1) and megacomplex MCI(2)III(2)IV(2)).

The protein resides in the mitochondrion inner membrane. It catalyses the reaction 4 Fe(II)-[cytochrome c] + O2 + 8 H(+)(in) = 4 Fe(III)-[cytochrome c] + 2 H2O + 4 H(+)(out). Its function is as follows. Component of the cytochrome c oxidase, the last enzyme in the mitochondrial electron transport chain which drives oxidative phosphorylation. The respiratory chain contains 3 multisubunit complexes succinate dehydrogenase (complex II, CII), ubiquinol-cytochrome c oxidoreductase (cytochrome b-c1 complex, complex III, CIII) and cytochrome c oxidase (complex IV, CIV), that cooperate to transfer electrons derived from NADH and succinate to molecular oxygen, creating an electrochemical gradient over the inner membrane that drives transmembrane transport and the ATP synthase. Cytochrome c oxidase is the component of the respiratory chain that catalyzes the reduction of oxygen to water. Electrons originating from reduced cytochrome c in the intermembrane space (IMS) are transferred via the dinuclear copper A center (CU(A)) of subunit 2 and heme A of subunit 1 to the active site in subunit 1, a binuclear center (BNC) formed by heme A3 and copper B (CU(B)). The BNC reduces molecular oxygen to 2 water molecules using 4 electrons from cytochrome c in the IMS and 4 protons from the mitochondrial matrix. The polypeptide is Cytochrome c oxidase subunit 3 (MT-CO3) (Coturnix japonica (Japanese quail)).